A 132-amino-acid polypeptide reads, in one-letter code: ATP synthase epsilon chain, chloroplastic (132 aa).

This sequence belongs to the ATPase epsilon chain family. As to quaternary structure, F-type ATPases have 2 components, CF(1) - the catalytic core - and CF(0) - the membrane proton channel. CF(1) has five subunits: alpha(3), beta(3), gamma(1), delta(1), epsilon(1). CF(0) has three main subunits: a, b and c.

It is found in the plastid. The protein localises to the chloroplast thylakoid membrane. Its function is as follows. Produces ATP from ADP in the presence of a proton gradient across the membrane. This is ATP synthase epsilon chain, chloroplastic from Calycanthus floridus var. glaucus (Eastern sweetshrub).